A 229-amino-acid polypeptide reads, in one-letter code: Matrix protein (229 aa).

The dynamin binding signature appears at 2 to 4 (QRL). The PPXY motif motif lies at 30-33 (PPSY). The PTAP/PSAP motif motif lies at 42–45 (PTAP).

Belongs to the vesiculoviruses matrix protein family. In terms of assembly, homomultimer. Interacts with viral nucleocapsid; this interaction contributes to the virion assembly. Interacts with the viral envelope glycoprotein; this interaction contributes to the virion assembly. Interacts with host RAE1-NUP98 complex. Interacts with host NEDD4 and TSG101. Interacts with host dynamin. Interacts with host NDUFAF4; the interaction inhibits viral propagation and is independent of interferon activation. Interacts with host GTF2H5; the interaction may inhibit host transcription. Interacts with host DRG1. Interaction with host CTDNEP1. Interaction with host ABCE1. In terms of processing, phosphorylated by host.

It is found in the virion. The protein localises to the host endomembrane system. The protein resides in the host nucleus membrane. It localises to the host nucleus. Its subcellular location is the host cytoplasm. Its function is as follows. Forms a double layer around the helical nucleocapsid, the inner matrix layer binding to the N helix and the outer matrix layer binding to the envelope glycoprotein. Plays a major role in assembly and budding of virion, by recruiting cellular partners of the ESCRT complexes that play a key role in releasing the budding particle from the host membrane. Condensates the ribonucleocapsid core during virus assembly. Inhibits the host mRNA nuclear export thereby inducing the shut off of cellular transcription and preventing the interferon signaling and the establishment of antiviral state in infected cells. This shutoff presumably inhibits interferon signaling and thus establishment of antiviral state in virus infected cells. Induces cell-rounding, cytoskeleton disorganization and apoptosis in infected cell. Inhibits host transcription, possibly through interaction with host DNA repair factor IIH/TFIIH GTF2H5 subunit. The chain is Matrix protein (M) from Homo sapiens (Human).